Reading from the N-terminus, the 109-residue chain is ATP synthase subunit c (109 aa).

2 consecutive transmembrane segments (helical) span residues 42–62 (YIGTGITMLAAGAVGLMQGFS) and 88–108 (LALAEAVAIYALIVSILIIFV).

It belongs to the ATPase C chain family. As to quaternary structure, F-type ATPases have 2 components, F(1) - the catalytic core - and F(0) - the membrane proton channel. F(1) has five subunits: alpha(3), beta(3), gamma(1), delta(1), epsilon(1). F(0) has three main subunits: a(1), b(2) and c(10-14). The alpha and beta chains form an alternating ring which encloses part of the gamma chain. F(1) is attached to F(0) by a central stalk formed by the gamma and epsilon chains, while a peripheral stalk is formed by the delta and b chains.

It is found in the cell membrane. Functionally, f(1)F(0) ATP synthase produces ATP from ADP in the presence of a proton or sodium gradient. F-type ATPases consist of two structural domains, F(1) containing the extramembraneous catalytic core and F(0) containing the membrane proton channel, linked together by a central stalk and a peripheral stalk. During catalysis, ATP synthesis in the catalytic domain of F(1) is coupled via a rotary mechanism of the central stalk subunits to proton translocation. In terms of biological role, key component of the F(0) channel; it plays a direct role in translocation across the membrane. A homomeric c-ring of between 10-14 subunits forms the central stalk rotor element with the F(1) delta and epsilon subunits. The sequence is that of ATP synthase subunit c from Ureaplasma parvum serovar 3 (strain ATCC 27815 / 27 / NCTC 11736).